Reading from the N-terminus, the 74-residue chain is Brevinin-2Tb (74 aa).

The N-terminal stretch at 1 to 22 is a signal peptide; that stretch reads MFTMKKSLLLFFFLGTISLSLC. A propeptide spanning residues 23 to 40 is cleaved from the precursor; that stretch reads QEERNADEDDGEMTEEEK. An intrachain disulfide couples cysteine 68 to cysteine 74.

It belongs to the frog skin active peptide (FSAP) family. Brevinin subfamily. As to expression, expressed by the skin glands.

The protein localises to the secreted. In terms of biological role, antimicrobial peptide. The sequence is that of Brevinin-2Tb from Rana temporaria (European common frog).